The following is a 163-amino-acid chain: UPF0478 protein SERP1299 (163 aa).

Residues 7–27 form a helical membrane-spanning segment; that stretch reads IAGIIAAIAFLILCIGIVVVL.

This sequence belongs to the UPF0478 family.

Its subcellular location is the cell membrane. The chain is UPF0478 protein SERP1299 from Staphylococcus epidermidis (strain ATCC 35984 / DSM 28319 / BCRC 17069 / CCUG 31568 / BM 3577 / RP62A).